The sequence spans 283 residues: Dihydropteroate synthase (283 aa).

Residues 18–274 form the Pterin-binding domain; sequence PKIMGIVNLT…DVKATADALK (257 aa). Asparagine 25 contacts Mg(2+). Residues threonine 66, aspartate 99, asparagine 119, aspartate 190, lysine 227, and 262 to 264 contribute to the (7,8-dihydropterin-6-yl)methyl diphosphate site; that span reads RVH.

This sequence belongs to the DHPS family. In terms of assembly, homodimer. Mg(2+) serves as cofactor.

It catalyses the reaction (7,8-dihydropterin-6-yl)methyl diphosphate + 4-aminobenzoate = 7,8-dihydropteroate + diphosphate. It functions in the pathway cofactor biosynthesis; tetrahydrofolate biosynthesis; 7,8-dihydrofolate from 2-amino-4-hydroxy-6-hydroxymethyl-7,8-dihydropteridine diphosphate and 4-aminobenzoate: step 1/2. In terms of biological role, catalyzes the condensation of para-aminobenzoate (pABA) with 6-hydroxymethyl-7,8-dihydropterin diphosphate (DHPt-PP) to form 7,8-dihydropteroate (H2Pte), the immediate precursor of folate derivatives. In Neisseria meningitidis serogroup C, this protein is Dihydropteroate synthase (folP).